Reading from the N-terminus, the 827-residue chain is SH3-containing GRB2-like protein 3-interacting protein 1 (827 aa).

3 disordered regions span residues 1–115, 142–205, and 223–278; these read MMEG…ESHK, SIGN…GPPL, and IWGS…QAAT. 2 stretches are compositionally biased toward basic and acidic residues: residues 16-32 and 40-54; these read RKKEKDTDSTGSPDRDG and PPYHSKAECAREGGK. Residues serine 78, serine 104, serine 105, serine 107, serine 149, serine 151, serine 156, and serine 169 each carry the phosphoserine modification. A phosphothreonine mark is found at threonine 180 and threonine 182. Serine 236 carries the phosphoserine modification. A compositionally biased stretch (pro residues) spans 245 to 260; the sequence is TGTPPPLPPKAVPATP. 2 positions are modified to phosphothreonine: threonine 247 and threonine 259. A phosphoserine mark is found at serine 265, serine 287, serine 289, serine 300, serine 316, and serine 319. The segment covering 265–276 has biased composition (polar residues); it reads SPLTVATGNDQA. The segment covering 314 to 333 has biased composition (basic and acidic residues); the sequence is HFSDASPEHVTPELTPREKV. The interval 314–523 is disordered; it reads HFSDASPEHV…LSAATTPTVE (210 aa). Phosphothreonine occurs at positions 324, 328, and 335. Low complexity predominate over residues 336 to 345; that stretch reads PPAASDIPAD. The segment covering 346-369 has biased composition (pro residues); sequence SPAPGPPGPPGSAGPPGPPGPRHV. A Phosphoserine modification is found at serine 371. Positions 377 to 392 are enriched in basic and acidic residues; it reads EVQKKVAEQTFIKDDY. Residue serine 398 is modified to Phosphoserine. Threonine 409 is subject to Phosphothreonine. Positions 436–455 are enriched in low complexity; the sequence is ASGASSPARPATPLVPCSST. A compositionally biased stretch (pro residues) spans 456 to 474; sequence TPPPPPPRPPSRPKLPPGK. Composition is skewed to low complexity over residues 481–491 and 498–521; these read SRPFSPPIHSS and PLARAESTSSISSTNSLSAATTPT. Position 485 is a phosphoserine (serine 485). One can recognise an MHD domain in the interval 558-826; the sequence is TLPVAAAFTE…RFAAGKYLAD (269 aa). Interaction with DPF motifs-containing proteins stretches follow at residues 560-566, 592-594, 666-669, and 812-817; these read PVAAAFT, SFP, TYYN, and SLIKKR. The necessary and sufficient to mediate interaction with CANX stretch occupies residues 648 to 827; that stretch reads MPNLMTHLKK…FAAGKYLADN (180 aa).

In terms of assembly, interacts with proteins essential or regulating the formation of functional clathrin-coated pits. Interacts with CANX. Interacts with AP2A1. Interacts with EPS15. Interacts with SH3GL3. Interacts with AMPH. Interacts with ITSN1 (via SH3 domains). Interacts with and REPS1. As to expression, specifically expressed in brain (at protein level).

It localises to the membrane. It is found in the clathrin-coated pit. In terms of biological role, may function in clathrin-mediated endocytosis. Has both a membrane binding/tubulating activity and the ability to recruit proteins essential to the formation of functional clathrin-coated pits. Has a preference for membranes enriched in phosphatidylserine and phosphoinositides and is required for the endocytosis of the transferrin receptor. May also bind tubulin. May play a role in the regulation of energy homeostasis. The sequence is that of SH3-containing GRB2-like protein 3-interacting protein 1 (Sgip1) from Rattus norvegicus (Rat).